The primary structure comprises 362 residues: Guanine nucleotide-binding protein alpha-10 subunit (362 aa).

Residue Gly2 is the site of N-myristoyl glycine attachment. Residue Cys4 is the site of S-palmitoyl cysteine attachment. The G-alpha domain maps to 35 to 362 (LEQSVLLIGP…QENLKDTGMI (328 aa)). Positions 38–51 (SVLLIGPGESGKST) are G1 motif. Residues 43–50 (GPGESGKS), 184–190 (VRIRVPT), 209–213 (DCGGQ), 278–281 (NKID), and Ala335 each bind GTP. Positions 50 and 190 each coordinate Mg(2+). The segment at 182 to 190 (DIVRIRVPT) is G2 motif. The interval 205–214 (LSVIDCGGQR) is G3 motif. Positions 274–281 (ILFLNKID) are G4 motif. A G5 motif region spans residues 333-337 (TCAIS).

It belongs to the G-alpha family. G proteins are composed of 3 units; alpha, beta and gamma. The alpha chain contains the guanine nucleotide binding site.

Its function is as follows. Guanine nucleotide-binding proteins (G proteins) are involved as modulators or transducers in various transmembrane signaling systems. This Caenorhabditis briggsae protein is Guanine nucleotide-binding protein alpha-10 subunit (gpa-10).